The primary structure comprises 340 residues: Glyceraldehyde-3-phosphate dehydrogenase (340 aa).

Residues 11–12 (SI) and glycine 111 each bind NAD(+). 140–142 (SCN) is a binding site for D-glyceraldehyde 3-phosphate. The active-site Nucleophile is the cysteine 141. Residue arginine 169 participates in NAD(+) binding. A D-glyceraldehyde 3-phosphate-binding site is contributed by 195-196 (HG). Glutamine 303 lines the NAD(+) pocket.

Belongs to the glyceraldehyde-3-phosphate dehydrogenase family. As to quaternary structure, homotetramer.

The protein localises to the cytoplasm. The catalysed reaction is D-glyceraldehyde 3-phosphate + phosphate + NADP(+) = (2R)-3-phospho-glyceroyl phosphate + NADPH + H(+). The enzyme catalyses D-glyceraldehyde 3-phosphate + phosphate + NAD(+) = (2R)-3-phospho-glyceroyl phosphate + NADH + H(+). It participates in carbohydrate degradation; glycolysis; pyruvate from D-glyceraldehyde 3-phosphate: step 1/5. The chain is Glyceraldehyde-3-phosphate dehydrogenase from Methanococcus maripaludis (strain DSM 14266 / JCM 13030 / NBRC 101832 / S2 / LL).